The primary structure comprises 114 residues: uncharacterized protein (114 aa).

Residues 1–37 (MLKKILSLFKKEEPKTEEKPTEVEEKKEEREEKEEKK) are disordered. The segment covering 9–37 (FKKEEPKTEEKPTEVEEKKEEREEKEEKK) has biased composition (basic and acidic residues).

This is an uncharacterized protein from Aquifex aeolicus (strain VF5).